We begin with the raw amino-acid sequence, 257 residues long: Diphthine synthase (257 aa).

Residues Leu9, Asp85, Val88, 113 to 114 (SI), Leu164, Ala209, and His234 contribute to the S-adenosyl-L-methionine site.

The protein belongs to the diphthine synthase family. In terms of assembly, homodimer.

The enzyme catalyses 2-[(3S)-amino-3-carboxypropyl]-L-histidyl-[translation elongation factor 2] + 3 S-adenosyl-L-methionine = diphthine-[translation elongation factor 2] + 3 S-adenosyl-L-homocysteine + 3 H(+). Its pathway is protein modification; peptidyl-diphthamide biosynthesis. Its function is as follows. S-adenosyl-L-methionine-dependent methyltransferase that catalyzes the trimethylation of the amino group of the modified target histidine residue in translation elongation factor 2 (EF-2), to form an intermediate called diphthine. The three successive methylation reactions represent the second step of diphthamide biosynthesis. The sequence is that of Diphthine synthase from Methanocaldococcus jannaschii (strain ATCC 43067 / DSM 2661 / JAL-1 / JCM 10045 / NBRC 100440) (Methanococcus jannaschii).